Here is a 238-residue protein sequence, read N- to C-terminus: Orotidine 5'-phosphate decarboxylase (238 aa).

Substrate contacts are provided by residues Asp10, Lys32, 59 to 68, Thr122, Arg184, Gln193, Gly213, and Arg214; that span reads DLKLHDIPNT. Lys61 functions as the Proton donor in the catalytic mechanism.

It belongs to the OMP decarboxylase family. Type 1 subfamily. As to quaternary structure, homodimer.

The enzyme catalyses orotidine 5'-phosphate + H(+) = UMP + CO2. The protein operates within pyrimidine metabolism; UMP biosynthesis via de novo pathway; UMP from orotate: step 2/2. Catalyzes the decarboxylation of orotidine 5'-monophosphate (OMP) to uridine 5'-monophosphate (UMP). The polypeptide is Orotidine 5'-phosphate decarboxylase (Bacillus cereus (strain AH187)).